The sequence spans 201 residues: dTTP/UTP pyrophosphatase (201 aa).

D81 (proton acceptor) is an active-site residue.

Belongs to the Maf family. YhdE subfamily. A divalent metal cation serves as cofactor.

The protein resides in the cytoplasm. The enzyme catalyses dTTP + H2O = dTMP + diphosphate + H(+). The catalysed reaction is UTP + H2O = UMP + diphosphate + H(+). Functionally, nucleoside triphosphate pyrophosphatase that hydrolyzes dTTP and UTP. May have a dual role in cell division arrest and in preventing the incorporation of modified nucleotides into cellular nucleic acids. The protein is dTTP/UTP pyrophosphatase of Bordetella avium (strain 197N).